The sequence spans 240 residues: UDP-2,3-diacylglucosamine hydrolase (240 aa).

The Mn(2+) site is built by Asp8, His10, Asp41, Asn79, and His114. 79–80 serves as a coordination point for substrate; it reads NR. Residues Asp122, Ser160, Asn164, Lys167, and His195 each contribute to the substrate site. The Mn(2+) site is built by His195 and His197.

Belongs to the LpxH family. The cofactor is Mn(2+).

It is found in the cell inner membrane. It carries out the reaction UDP-2-N,3-O-bis[(3R)-3-hydroxytetradecanoyl]-alpha-D-glucosamine + H2O = 2-N,3-O-bis[(3R)-3-hydroxytetradecanoyl]-alpha-D-glucosaminyl 1-phosphate + UMP + 2 H(+). It participates in glycolipid biosynthesis; lipid IV(A) biosynthesis; lipid IV(A) from (3R)-3-hydroxytetradecanoyl-[acyl-carrier-protein] and UDP-N-acetyl-alpha-D-glucosamine: step 4/6. Its function is as follows. Hydrolyzes the pyrophosphate bond of UDP-2,3-diacylglucosamine to yield 2,3-diacylglucosamine 1-phosphate (lipid X) and UMP by catalyzing the attack of water at the alpha-P atom. Involved in the biosynthesis of lipid A, a phosphorylated glycolipid that anchors the lipopolysaccharide to the outer membrane of the cell. This Escherichia coli O127:H6 (strain E2348/69 / EPEC) protein is UDP-2,3-diacylglucosamine hydrolase.